Here is a 259-residue protein sequence, read N- to C-terminus: UPF0246 protein PBPRA0561 (259 aa).

The protein belongs to the UPF0246 family.

The polypeptide is UPF0246 protein PBPRA0561 (Photobacterium profundum (strain SS9)).